We begin with the raw amino-acid sequence, 137 residues long: Nucleoside diphosphate kinase (137 aa).

ATP contacts are provided by Lys9, Phe57, Arg85, Thr91, Arg102, and Asn112. His115 serves as the catalytic Pros-phosphohistidine intermediate.

It belongs to the NDK family. Homotetramer. Mg(2+) is required as a cofactor.

The protein localises to the cytoplasm. It catalyses the reaction a 2'-deoxyribonucleoside 5'-diphosphate + ATP = a 2'-deoxyribonucleoside 5'-triphosphate + ADP. The catalysed reaction is a ribonucleoside 5'-diphosphate + ATP = a ribonucleoside 5'-triphosphate + ADP. In terms of biological role, major role in the synthesis of nucleoside triphosphates other than ATP. The ATP gamma phosphate is transferred to the NDP beta phosphate via a ping-pong mechanism, using a phosphorylated active-site intermediate. The polypeptide is Nucleoside diphosphate kinase (Thermus thermophilus (strain ATCC BAA-163 / DSM 7039 / HB27)).